Consider the following 120-residue polypeptide: Large ribosomal subunit protein bL19 (120 aa).

The protein belongs to the bacterial ribosomal protein bL19 family.

This protein is located at the 30S-50S ribosomal subunit interface and may play a role in the structure and function of the aminoacyl-tRNA binding site. This chain is Large ribosomal subunit protein bL19, found in Chlorobium limicola (strain DSM 245 / NBRC 103803 / 6330).